Here is a 92-residue protein sequence, read N- to C-terminus: Probable Fe(2+)-trafficking protein (92 aa).

This sequence belongs to the Fe(2+)-trafficking protein family.

Functionally, could be a mediator in iron transactions between iron acquisition and iron-requiring processes, such as synthesis and/or repair of Fe-S clusters in biosynthetic enzymes. This Shewanella sp. (strain W3-18-1) protein is Probable Fe(2+)-trafficking protein.